Consider the following 81-residue polypeptide: ATP synthase subunit c (81 aa).

2 consecutive transmembrane segments (helical) span residues 5–25 (IAAG…IGAG) and 57–77 (VGLV…FVFA).

Belongs to the ATPase C chain family. F-type ATPases have 2 components, F(1) - the catalytic core - and F(0) - the membrane proton channel. F(1) has five subunits: alpha(3), beta(3), gamma(1), delta(1), epsilon(1). F(0) has three main subunits: a(1), b(2) and c(10-14). The alpha and beta chains form an alternating ring which encloses part of the gamma chain. F(1) is attached to F(0) by a central stalk formed by the gamma and epsilon chains, while a peripheral stalk is formed by the delta and b chains.

It localises to the cell membrane. Functionally, f(1)F(0) ATP synthase produces ATP from ADP in the presence of a proton or sodium gradient. F-type ATPases consist of two structural domains, F(1) containing the extramembraneous catalytic core and F(0) containing the membrane proton channel, linked together by a central stalk and a peripheral stalk. During catalysis, ATP synthesis in the catalytic domain of F(1) is coupled via a rotary mechanism of the central stalk subunits to proton translocation. Its function is as follows. Key component of the F(0) channel; it plays a direct role in translocation across the membrane. A homomeric c-ring of between 10-14 subunits forms the central stalk rotor element with the F(1) delta and epsilon subunits. The polypeptide is ATP synthase subunit c (Mycobacterium sp. (strain JLS)).